A 94-amino-acid chain; its full sequence is Large ribosomal subunit protein eL42 (94 aa).

4 residues coordinate Zn(2+): Cys-11, Cys-14, Cys-70, and Cys-73. Residues 11-73 (CPYCKKHTIH…IDLRFKCTEC (63 aa)) form a C4-type zinc finger.

Belongs to the eukaryotic ribosomal protein eL42 family. As to quaternary structure, part of the 50S ribosomal subunit. Zn(2+) serves as cofactor.

Binds to the 23S rRNA. The sequence is that of Large ribosomal subunit protein eL42 from Methanocaldococcus jannaschii (strain ATCC 43067 / DSM 2661 / JAL-1 / JCM 10045 / NBRC 100440) (Methanococcus jannaschii).